Reading from the N-terminus, the 241-residue chain is ATP-dependent Clp protease ATP-binding subunit CLPT2, chloroplastic (241 aa).

The N-terminal 75 residues, 1–75 (MAAHSSCNFA…PRRIHKSAIS (75 aa)), are a transit peptide targeting the chloroplast. The region spanning 91-237 (KPKWSWRAIK…ELESFASESG (147 aa)) is the Clp R domain. Repeat stretches follow at residues 94-159 (WSWR…LGKA) and 171-237 (LTED…SESG).

This sequence belongs to the ClpA/ClpB family. As to quaternary structure, monomer and homodimer. The dimers monomerize before association to the P-ring. Component of the chloroplastic Clp protease core complex which consist of at least 16 proteins: CLPP4 (3 copies), CLPP5 (3 copies), CLPR4 (2 copies), ClpP1 (1 copy), CLPP6 (1 copy), CLPR2 (1 copy), CLPT1 (1 copy), CLPT2 (1 copy) and 3 copies of CLPP3 and/or CLPR1 and/or CLPR3. Interacts with AHK2. Interacts with CPN21. No interactions with CLPS1.

The protein resides in the plastid. The protein localises to the chloroplast. Its function is as follows. Accessory protein regulating the assembly of the plastidial Clp protease system. CLPT1 first binds to the heptameric P-ring containing the CLP3-6 subunits followed by CLPT2, and only then does the P-ring combine with the R-ring composed of the clpP1 and CLPR1-4 subunits. Once the core complex is fully assembled, it then associates to the CLPC chaperone partner to form the functional protease. CLPT2 and CLPT1 are partially redundant. The protein is ATP-dependent Clp protease ATP-binding subunit CLPT2, chloroplastic of Arabidopsis thaliana (Mouse-ear cress).